We begin with the raw amino-acid sequence, 317 residues long: Putative ribose-phosphate pyrophosphokinase (317 aa).

The tract at residues 211 to 224 (GRDVIVLDDEIAKG) is binding of phosphoribosylpyrophosphate.

The protein belongs to the ribose-phosphate pyrophosphokinase family.

It carries out the reaction D-ribose 5-phosphate + ATP = 5-phospho-alpha-D-ribose 1-diphosphate + AMP + H(+). The polypeptide is Putative ribose-phosphate pyrophosphokinase (Streptomyces coelicolor (strain ATCC BAA-471 / A3(2) / M145)).